The primary structure comprises 347 residues: Spermidine/putrescine import ATP-binding protein PotA (347 aa).

The region spanning 6-238 (LEIKNLSHYY…PKTKFVADFI (233 aa)) is the ABC transporter domain. 40–47 (GPSGCGKT) is an ATP binding site.

Belongs to the ABC transporter superfamily. Spermidine/putrescine importer (TC 3.A.1.11.1) family. As to quaternary structure, the complex is composed of two ATP-binding proteins (PotA), two transmembrane proteins (PotB and PotC) and a solute-binding protein (PotD).

It is found in the cell inner membrane. The catalysed reaction is ATP + H2O + polyamine-[polyamine-binding protein]Side 1 = ADP + phosphate + polyamineSide 2 + [polyamine-binding protein]Side 1.. Part of the ABC transporter complex PotABCD involved in spermidine/putrescine import. Responsible for energy coupling to the transport system. The sequence is that of Spermidine/putrescine import ATP-binding protein PotA from Borreliella afzelii (strain PKo) (Borrelia afzelii).